Consider the following 469-residue polypeptide: Mitochondrial adenyl nucleotide antiporter SLC25A25 (469 aa).

The interval 1-165 is regulatory N-terminal domain; that stretch reads MLCLCLYVPI…LYWKHSTIFD (165 aa). Residues 1–189 are Mitochondrial intermembrane-facing; the sequence is MLCLCLYVPI…ERQTGMWWRH (189 aa). 3 EF-hand domains span residues 47 to 80, 78 to 113, and 114 to 149; these read TYRQWKQKIVQAGDKDLDGQLDFEEFVHYLQDHE, DHEKKLRLVFKSLDKKNDGRIDAQEIMQSLRDLGVK, and ISEQQAEKILKSMDKNGTMTIDWNEWRDYHLLHPVE. Ca(2+) contacts are provided by Asp-60, Asp-62, Asp-64, Gln-66, and Glu-71. Positions 151-160 are linker region; that stretch reads IPEIILYWKH. A C-terminal transmembrane transporter domain region spans residues 166–469; it reads VGENLTVPDE…LKITLGVQSR (304 aa). Solcar repeat units follow at residues 184–270, 278–363, and 375–463; these read GMWW…MKRL, LRIH…LKNT, and PGVF…LKIT. The helical transmembrane segment at 190–207 threads the bilayer; the sequence is LVAGGGAGAVSRTCTAPL. Over 208–244 the chain is Mitochondrial matrix; that stretch reads DRLKVLMQVHASRSNNMCIVGGFTQMIREGGAKSLWR. Residues 245–264 traverse the membrane as a helical segment; that stretch reads GNGINVLKIAPESAIKFMAY. Topologically, residues 265 to 287 are mitochondrial intermembrane; that stretch reads EQMKRLVGSDQETLRIHERLVAG. Residues 288-301 traverse the membrane as a helical segment; the sequence is SLAGAIAQSSIYPM. Residues 302 to 337 are Mitochondrial matrix-facing; sequence EVLKTRMALRKTGQYSGMLDCARRILAKEGVAAFYK. Residues 338 to 357 traverse the membrane as a helical segment; that stretch reads GYIPNMLGIIPYAGIDLAVY. Residues 358–380 lie on the Mitochondrial intermembrane side of the membrane; sequence ETLKNTWLQRYAVNSADPGVFVL. The chain crosses the membrane as a helical span at residues 381–398; that stretch reads LACGTISSTCGQLASYPL. Residues 399-437 are Mitochondrial matrix-facing; the sequence is ALVRTRMQAQASIEGAPEVTMSSLFKQILRTEGAFGLYR. Residues 438-457 traverse the membrane as a helical segment; the sequence is GLAPNFMKVIPAVSISYVVY. Topologically, residues 458–469 are mitochondrial intermembrane; it reads ENLKITLGVQSR.

Belongs to the mitochondrial carrier (TC 2.A.29) family.

The protein localises to the mitochondrion inner membrane. The enzyme catalyses Mg(2+)(out) + phosphate(in) + ATP(out) = Mg(2+)(in) + phosphate(out) + ATP(in). Its activity is regulated as follows. Activated by an increase in cytosolic calcium levels that induce a conformational change of the N-terminal regulatory domain, uncapping the channel and allowing transport. Functionally, electroneutral antiporter that most probably mediates the transport of adenyl nucleotides through the inner mitochondrial membrane. Originally identified as an ATP-magnesium/inorganic phosphate antiporter, it could have a broader specificity for adenyl nucleotides. By regulating the mitochondrial matrix adenyl nucleotide pool could adapt to changing cellular energetic demands and indirectly regulate adenyl nucleotide-dependent metabolic pathways. This is Mitochondrial adenyl nucleotide antiporter SLC25A25 from Mus musculus (Mouse).